A 681-amino-acid chain; its full sequence is Macrolide export ATP-binding/permease protein MacB (681 aa).

Residues 6–244 (LKLAAVTRRF…FAEVGVGAAA (239 aa)) enclose the ABC transporter domain. 42-49 (GASGSGKS) serves as a coordination point for ATP. The span at 246 to 273 (TETAADTRSAPASGDAPPPANNDTAADP) shows a compositional bias: low complexity. The disordered stretch occupies residues 246 to 298 (TETAADTRSAPASGDAPPPANNDTAADPAPAPDASPPAPAVSPKHAGWRGSRS). Over residues 274 to 285 (APAPDASPPAPA) the composition is skewed to pro residues. The next 4 helical transmembrane spans lie at 306–326 (CLTM…VAVG), 554–574 (LTLL…IGVM), 611–631 (LVCL…GALF), and 644–664 (AGAI…FGFM).

Belongs to the ABC transporter superfamily. Macrolide exporter (TC 3.A.1.122) family. As to quaternary structure, homodimer.

The protein localises to the cell inner membrane. In terms of biological role, non-canonical ABC transporter that contains transmembrane domains (TMD), which form a pore in the inner membrane, and an ATP-binding domain (NBD), which is responsible for energy generation. Confers resistance against macrolides. This chain is Macrolide export ATP-binding/permease protein MacB, found in Burkholderia orbicola (strain AU 1054).